The following is a 442-amino-acid chain: uncharacterized protein (442 aa).

The 238-residue stretch at 1–238 (MKAEGLSGGY…QSIKAVYDTD (238 aa)) folds into the ABC transporter domain. 33–40 (GPNGSGKT) contributes to the ATP binding site.

Belongs to the ABC transporter superfamily. In terms of assembly, the complex is composed of two ATP-binding proteins (YvrA), two transmembrane proteins (YvrB) and a solute-binding protein (YvrC).

Probably part of an ABC transporter complex. Probably responsible for energy coupling to the transport system. This is an uncharacterized protein from Bacillus subtilis (strain 168).